The chain runs to 287 residues: Chlorophyll a-b binding protein CP29.2, chloroplastic (287 aa).

The N-terminal 31 residues, 1–31 (MAATSTAAAASSIMGTRVVSDISSNSSRFTA), are a transit peptide targeting the chloroplast. An N2-acetylarginine modification is found at Arg32. Phosphothreonine is present on Thr37. Residue Trp55 coordinates chlorophyll b. A chlorophyll a-binding site is contributed by Phe75. A phosphothreonine mark is found at Thr109 and Thr111. Glu137 and His140 together coordinate chlorophyll a. A helical membrane pass occupies residues 143 to 163 (WAMLATLGAITVEWLTGVTWQ). Leu177 lines the chlorophyll a pocket. A helical membrane pass occupies residues 181-201 (LPFSISTLIWIEVLVIGYIEF). 2 residues coordinate chlorophyll b: Glu200 and Arg203. Glu239, His242, Arg244, Gln256, and His271 together coordinate chlorophyll a. Residues 245-265 (LAMVGFLGFAVQAAATGKGPL) traverse the membrane as a helical segment.

Belongs to the light-harvesting chlorophyll a/b-binding (LHC) protein family. In terms of assembly, the LHC complex consists of chlorophyll a-b binding proteins. Binds at least 14 chlorophylls (8 Chl-a and 6 Chl-b) and carotenoids such as lutein and neoxanthin. serves as cofactor. In terms of processing, photoregulated by reversible phosphorylation of its threonine residues.

Its subcellular location is the plastid. It is found in the chloroplast thylakoid membrane. Functionally, the light-harvesting complex (LHC) functions as a light receptor, it captures and delivers excitation energy to photosystems with which it is closely associated. The chain is Chlorophyll a-b binding protein CP29.2, chloroplastic (LHCB4.2) from Arabidopsis thaliana (Mouse-ear cress).